Consider the following 362-residue polypeptide: Apelin receptor A (362 aa).

The Extracellular portion of the chain corresponds to methionine 1–leucine 34. An N-linked (GlcNAc...) asparagine glycan is attached at asparagine 19. Cystine bridges form between cysteine 23–cysteine 286 and cysteine 105–cysteine 184. A helical membrane pass occupies residues isoleucine 35–phenylalanine 55. The Cytoplasmic portion of the chain corresponds to threonine 56 to asparagine 73. Residues leucine 74 to leucine 94 form a helical membrane-spanning segment. Topologically, residues glycine 95–lysine 106 are extracellular. Residues isoleucine 107–serine 127 form a helical membrane-spanning segment. Residues phenylalanine 128–methionine 149 lie on the Cytoplasmic side of the membrane. The helical transmembrane segment at leucine 150–phenylalanine 170 threads the bilayer. The Extracellular portion of the chain corresponds to arginine 171 to alanine 211. N-linked (GlcNAc...) asparagine glycosylation is present at asparagine 180. A helical membrane pass occupies residues leucine 212–valine 232. Residues threonine 233 to arginine 248 are Cytoplasmic-facing. A helical transmembrane segment spans residues leucine 249–valine 269. Residues leucine 270–asparagine 284 lie on the Extracellular side of the membrane. A helical transmembrane segment spans residues serine 285 to valine 305. Residues asparagine 306–valine 362 lie on the Cytoplasmic side of the membrane.

Belongs to the G-protein coupled receptor 1 family. In terms of tissue distribution, first expressed before epiboly in dorsal precursors. During epiboly, expressed in the enveloping layer, yolk syncytial layer and migrating mesendoderm. During segmentation stages, expressed in epithelial structures such as adaxial cells, border cells of the newly formed somites, developing lens, otic vesicles and venous vasculature.

It localises to the cell membrane. Functionally, g protein-coupled receptor for peptide hormones apelin (apln) and apelin receptor early endogenous ligand (apela), that plays a role in the regulation of normal cardiovascular function and fluid homeostasis. When acting as apelin receptor, activates both G(i) protein pathway that inhibits adenylate cyclase activity, and the beta-arrestin pathway that promotes internalization of the receptor. Also functions as mechanoreceptor that is activated by pathological stimuli in a G-protein-independent fashion to induce beta-arrestin signaling, hence eliciting cardiac hypertrophy. However, the presence of apelin ligand blunts cardiac hypertrophic induction from APLNR/APJ on response to pathological stimuli. Plays a key role in early development such as gastrulation, blood vessels formation and heart morphogenesis by acting as a receptor for apela hormone, promoting endoderm and mesendoderm cell migration and regulating the migration of cells fated to become myocardial progenitors, respectively. Positively regulates angioblast migration toward the embryonic midline, i.e. the position of the future vessel formation, during vasculogenesis. May promote sinus venosus (SV)-derived endothelial cells migration into the developing heart to promote coronary blood vessel development. Required for cardiovascular development, particularly for intersomitic vein angiogenesis by acting as a receptor for apln hormone. Also plays a role in various processes in adults such as regulation of blood vessel formation, blood pressure, heart contractility, and heart failure. Acts redundantly with agtrl1b in heart development. The polypeptide is Apelin receptor A (aplnra) (Danio rerio (Zebrafish)).